Here is a 439-residue protein sequence, read N- to C-terminus: Probable RNA-binding protein 23 (439 aa).

The segment at 13-159 (MLEAPYKKEE…PVREPVDNLS (147 aa)) is disordered. Positions 17-34 (PYKKEEDEQQRKEVKKDY) are enriched in basic and acidic residues. Positions 36–57 (SNTTSSTSNSGNETSGSSTIGE) are enriched in low complexity. The segment covering 60–90 (KKKRSRSHNKSRDRKRSRSRDRDRYRRRNSR) has biased composition (basic residues). The segment covering 103–125 (RSWDRRHGSESRSRDHRREDRVH) has biased composition (basic and acidic residues). Phosphoserine occurs at positions 128 and 149. Residues 144–159 (HFREKSPVREPVDNLS) show a composition bias toward basic and acidic residues. 2 RRM domains span residues 166–243 (RTVF…ASQA) and 263–341 (MRLY…HVTE).

Belongs to the splicing factor SR family. Post-translationally, aryl sulfonamide anticancer drugs, such as indisulam (E7070) or E7820, promote ubiquitination and subsequent degradation by the DCX(DCAF15) complex. Aryl sulfonamide anticancer drugs change the substrate specificity of DCAF15 by acting as a molecular glue that promotes binding between DCAF15 and weak affinity interactor RBM23. Highly expressed in placenta, liver, skeletal muscle, heart and kidney. Expressed at lower levels in the colon, thymus, spleen, small intestine and lung.

The protein localises to the nucleus. In terms of biological role, RNA-binding protein that acts both as a transcription coactivator and pre-mRNA splicing factor. Regulates steroid hormone receptor-mediated transcription, independently of the pre-mRNA splicing factor activity. This is Probable RNA-binding protein 23 from Homo sapiens (Human).